We begin with the raw amino-acid sequence, 238 residues long: Dolichyldiphosphatase 1 (238 aa).

4 helical membrane-spanning segments follow: residues 33 to 53, 100 to 120, 130 to 150, and 162 to 182; these read LAYLSLGPVFVIVGFVTLIIF, PSSHSQFMWFFSVYSFLFLYL, FLDLLWRHVLSLGLLAAAFLV, and WSQVLYGGIAGGLMAVAWFIF.

It belongs to the dolichyldiphosphatase family.

Its subcellular location is the endoplasmic reticulum membrane. It carries out the reaction a di-trans,poly-cis-dolichyl diphosphate + H2O = a di-trans,poly-cis-dolichyl phosphate + phosphate + H(+). The protein operates within protein modification; protein glycosylation. Required for efficient N-glycosylation. Necessary for maintaining optimal levels of dolichol-linked oligosaccharides. Hydrolyzes dolichyl pyrophosphate at a very high rate and dolichyl monophosphate at a much lower rate. Does not act on phosphatidate. This is Dolichyldiphosphatase 1 (DOLPP1) from Plecturocebus moloch (Dusky titi monkey).